The chain runs to 140 residues: L-fucose mutarotase (140 aa).

Catalysis depends on H22, which acts as the Proton donor. Substrate is bound by residues D30, R107, and 129–131; that span reads YGN.

The protein belongs to the RbsD / FucU family. FucU mutarotase subfamily. Homodecamer.

It localises to the cytoplasm. The catalysed reaction is alpha-L-fucose = beta-L-fucose. The protein operates within carbohydrate metabolism; L-fucose metabolism. Functionally, involved in the anomeric conversion of L-fucose. This is L-fucose mutarotase from Shigella boydii serotype 18 (strain CDC 3083-94 / BS512).